The following is a 472-amino-acid chain: UDP-N-acetylmuramate--L-alanine ligase (472 aa).

Gly-122–Thr-128 contributes to the ATP binding site.

The protein belongs to the MurCDEF family.

The protein localises to the cytoplasm. It catalyses the reaction UDP-N-acetyl-alpha-D-muramate + L-alanine + ATP = UDP-N-acetyl-alpha-D-muramoyl-L-alanine + ADP + phosphate + H(+). Its pathway is cell wall biogenesis; peptidoglycan biosynthesis. In terms of biological role, cell wall formation. In Myxococcus xanthus (strain DK1622), this protein is UDP-N-acetylmuramate--L-alanine ligase.